The chain runs to 429 residues: Enolase (429 aa).

A (2R)-2-phosphoglycerate-binding site is contributed by glutamine 163. Residue glutamate 205 is the Proton donor of the active site. Mg(2+) is bound by residues aspartate 242, glutamate 287, and aspartate 314. The (2R)-2-phosphoglycerate site is built by lysine 339, arginine 368, serine 369, and lysine 390. Catalysis depends on lysine 339, which acts as the Proton acceptor.

Belongs to the enolase family. Homooctamer. Mg(2+) is required as a cofactor.

It is found in the cytoplasm. The protein localises to the secreted. The protein resides in the cell surface. The catalysed reaction is (2R)-2-phosphoglycerate = phosphoenolpyruvate + H2O. It participates in carbohydrate degradation; glycolysis; pyruvate from D-glyceraldehyde 3-phosphate: step 4/5. Catalyzes the reversible conversion of 2-phosphoglycerate (2-PG) into phosphoenolpyruvate (PEP). It is essential for the degradation of carbohydrates via glycolysis. This chain is Enolase, found in Zymomonas mobilis subsp. mobilis (strain ATCC 31821 / ZM4 / CP4).